We begin with the raw amino-acid sequence, 103 residues long: Putative RNA-binding protein RbpB (103 aa).

Residues 2–79 form the RRM domain; it reads SIYVGNLSYD…RDLKVNKAKP (78 aa). Positions 74–85 are enriched in basic and acidic residues; sequence VNKAKPREDRGG. The disordered stretch occupies residues 74–103; it reads VNKAKPREDRGGSRGSFGGNRSNNNFRNRY. The span at 92–103 shows a compositional bias: low complexity; it reads GNRSNNNFRNRY.

In Nostoc sp. (strain PCC 7120 / SAG 25.82 / UTEX 2576), this protein is Putative RNA-binding protein RbpB (rbpB).